We begin with the raw amino-acid sequence, 727 residues long: Sodium-dependent neutral amino acid transporter SLC6A17 (727 aa).

The Cytoplasmic portion of the chain corresponds to 1-68 (MPKNSKVTQR…DRPAWNSKLQ (68 aa)). Ser-13 and Ser-20 each carry phosphoserine. A helical transmembrane segment spans residues 69–89 (YILAQIGFSVGLGNIWRFPYL). The Extracellular portion of the chain corresponds to 90–96 (CQKNGGG). Residues 97-116 (AYLVPYLVLLIIIGIPLFFL) traverse the membrane as a helical segment. Residues 117–140 (ELAVGQRIRRGSIGVWHYVCPRLG) are Cytoplasmic-facing. A helical membrane pass occupies residues 141–161 (GIGFSSCIVCLFVGLYYNVII). Residues 162–224 (GWSVFYFFKS…NSISESGGLN (63 aa)) are Extracellular-facing. Asn-186 carries N-linked (GlcNAc...) asparagine glycosylation. Residues 225–243 (WKMTLCLLVAWSIVGMAVV) form a helical membrane-spanning segment. The Cytoplasmic segment spans residues 244–251 (KGIQSSGK). A helical membrane pass occupies residues 252–269 (VMYFSSLFPYVVLACFLV). Topologically, residues 270–304 (RGLLLRGAVDGILHMFTPKLDKMLDPQVWREAATQ) are extracellular. The chain crosses the membrane as a helical span at residues 305–322 (VFFALGLGFGGVIAFSSY). The Cytoplasmic portion of the chain corresponds to 323 to 333 (NKQDNNCHFDA). A helical membrane pass occupies residues 334–355 (ALVSFINFFTSVLATLVVFAVL). Residues 356–451 (GFKANIMNEK…FIAFTEAMTH (96 aa)) are Extracellular-facing. A Phosphotyrosine modification is found at Tyr-377. The N-linked (GlcNAc...) asparagine glycan is linked to Asn-393. The helical transmembrane segment at 452–471 (FPASPFWSVMFFLMLINLGL) threads the bilayer. The Cytoplasmic segment spans residues 472-494 (GSMIGTMAGITTPIIDTFKVPKE). The helical transmembrane segment at 495–513 (MFTVGCCVFAFFVGLLFVQ) threads the bilayer. The Extracellular segment spans residues 514–528 (RSGNYFVTMFDDYSA). The helical transmembrane segment at 529 to 549 (TLPLTVIVILENIAVAWIYGT) threads the bilayer. Residues 550 to 569 (KKFMQELTEMLGFQPYRFYF) are Cytoplasmic-facing. A helical transmembrane segment spans residues 570-591 (YMWKFVSPLCMAVLTTASIIQL). Residues 592–618 (GVSPPGYSAWIKEEAAERYLYFPNWAM) are Extracellular-facing. Residues 619-641 (ALLITLIAVATLPIPVVFILRHF) traverse the membrane as a helical segment. At 642–727 (HLLSDGSNTL…LLASTPESEL (86 aa)) the chain is on the cytoplasmic side. 2 positions are modified to phosphoserine: Ser-665 and Ser-701. Positions 680–727 (VPSEAPSPMPTHRSYLGPGSTSPLDNSNNPNGRYGSGYLLASTPESEL) are disordered. Residues 698–710 (GSTSPLDNSNNPN) show a composition bias toward polar residues.

The protein belongs to the sodium:neurotransmitter symporter (SNF) (TC 2.A.22) family. As to expression, expressed in the brain. The strongest expression levels in embryonic, postnatal, and adult stages are found in both cortical and hippocampal tissues.

The protein resides in the cytoplasmic vesicle. It localises to the secretory vesicle. It is found in the synaptic vesicle membrane. The protein localises to the postsynapse. Its subcellular location is the presynapse. The enzyme catalyses L-proline(in) + Na(+)(in) = L-proline(out) + Na(+)(out). It carries out the reaction L-leucine(in) + Na(+)(in) = L-leucine(out) + Na(+)(out). It catalyses the reaction glycine(in) + Na(+)(in) = glycine(out) + Na(+)(out). The catalysed reaction is L-alanine(in) + Na(+)(in) = L-alanine(out) + Na(+)(out). The enzyme catalyses L-glutamine(in) + Na(+)(in) = L-glutamine(out) + Na(+)(out). In terms of biological role, synaptic vesicle transporter with apparent selectivity for neutral amino acids. The transport is sodium-coupled but chloride-independent, likely driven by the proton electrochemical gradient generated by vacuolar H(+)-ATPase in an overall electrogenic mechanism. May contribute to the synaptic uptake of neurotransmitter precursors in a process coupled in part to vesicle exocytosis. The protein is Sodium-dependent neutral amino acid transporter SLC6A17 of Mus musculus (Mouse).